A 254-amino-acid chain; its full sequence is Low affinity immunoglobulin gamma Fc region receptor III-A (254 aa).

The N-terminal stretch at 1 to 20 (MWHLLPPSALLLLISSVTKA) is a signal peptide. Over 21-209 (ADPSKAVVLL…IAPLFPLWQQ (189 aa)) the chain is Extracellular. 2 Ig-like C2-type domains span residues 23 to 104 (PSKA…VQLQ) and 121 to 174 (KGES…YYCR). N-linked (GlcNAc...) asparagine glycans are attached at residues Asn-42, Asn-63, Asn-166, and Asn-181. Cystine bridges form between Cys-47–Cys-90 and Cys-129–Cys-173. Residues 210-230 (IAFCLMMGLLFAVDTGLYFFV) traverse the membrane as a helical segment. At 231 to 254 (RRDLRRSMVHKEEYNFKWSQAQDK) the chain is on the cytoplasmic side.

Forms a heterooligomeric complex with ITAM-containing signaling subunits FCER1G. Interacts (via transmembrane domain) with signaling subunits; this interaction is a prerequisite for receptor complex expression on the cell surface and intracellular signal transduction. Binds the Fc region of antigen-complexed IgG. N-glycosylated. In terms of processing, phosphorylated following receptor ligation.

The protein resides in the cell membrane. Receptor for the invariable Fc fragment of immunoglobulin gamma (IgG). Binds with intermediate affinity to both IgG2a and IgG2b. Can bind to IgG2a and IgG2b monomers. Does not display binding to IgG1 or IgG3. Recognizes neutralizing virus-specific IgGs displayed on the cell surface of infected cells and triggers antibody-dependent cellular cytotoxicity (ADCC). Confers protection to lethal influenza virus infection. On splenic dendritic cells, uptakes antigen immune complexes and efficiently divert them into MHC class I and II antigen presentation pathways to provide for superior priming of CD4-positive and CD8-positive T cell immune responses. Mediates neutrophil activation by IgG complexes redundantly with FCGR2A. Plays a role in promoting bone resorption by enhancing osteoclast differentiation following binding to IgG2a. Also acts as a receptor for the Fc region of immunoglobulin epsilon (IgE). Binds with low affinity to both the a and b allotypes of IgE. Has also been shown to bind to IgE allotype a only but not to allotype b. Binds aggregated IgE but not the monomeric form and bound monomeric IgG is readily displaced by IgE complexes. Binding to IgE promotes macrophage-mediated phagocytosis, antigen presentation to T cells, production of pro-inflammatory cytokines and the late phase of cutaneous allergic reactions. Mediates enhanced ADCC in response to afucosylated IgGs. This chain is Low affinity immunoglobulin gamma Fc region receptor III-A, found in Cavia porcellus (Guinea pig).